The following is a 588-amino-acid chain: Tetratricopeptide repeat protein 39B (588 aa).

3 TPR repeats span residues 294–327 (SIIL…QQEW), 485–518 (CLVQ…EKRV), and 526–559 (PFTF…YKDY).

This sequence belongs to the TTC39 family.

Functionally, may be involved in lipid metabolism. This chain is Tetratricopeptide repeat protein 39B (ttc39b), found in Xenopus tropicalis (Western clawed frog).